Here is a 353-residue protein sequence, read N- to C-terminus: Mitochondrial import inner membrane translocase subunit TIM50 (353 aa).

Residues 1-21 (MAASAALFSRLRSGLRVGARG) constitute a mitochondrion transit peptide. Over 22 to 65 (LCTRLAPPPPRTPEQVTEIANRGGSKAQGPQHQPGSEGPSYAKK) the chain is Mitochondrial matrix. Residues 24-59 (TRLAPPPPRTPEQVTEIANRGGSKAQGPQHQPGSEG) form a disordered region. The helical transmembrane segment at 66–86 (IALWIAGLLGAGGTVSIVYIF) threads the bilayer. Over 87–353 (GNNPVDENGT…SRLWPRSKQP (267 aa)) the chain is Mitochondrial intermembrane. Residues 143–286 (YYQPPYTLVL…LDLSAFLKTI (144 aa)) form the FCP1 homology domain. Residue S341 is modified to Phosphoserine.

The protein belongs to the TIM50 family. In terms of assembly, component of the TIM23 complex at least composed of TIMM23, TIMM17 (TIMM17A or TIMM17B) and TIMM50; within this complex, directly interacts with TIMM23. The complex interacts with the TIMM44 component of the PAM complex and with DNAJC15.

The protein resides in the mitochondrion inner membrane. Its function is as follows. Essential component of the TIM23 complex, a complex that mediates the translocation of transit peptide-containing proteins across the mitochondrial inner membrane. Has some phosphatase activity in vitro; however such activity may not be relevant in vivo. This is Mitochondrial import inner membrane translocase subunit TIM50 (Timm50) from Mus musculus (Mouse).